Here is a 508-residue protein sequence, read N- to C-terminus: CUGBP Elav-like family member 2 (508 aa).

Necessary for RNA-binding, TNNT2 exon 5 and NMDA R1 exon 21 inclusion regions lie at residues 1–283 (MRCP…LQNL) and 357–508 (LAGM…SKPY). RRM domains are found at residues 40–123 (IKMF…PADS), 132–212 (RKLF…FADT), and 423–501 (ANLF…LKRS).

It belongs to the CELF/BRUNOL family. In terms of assembly, interacts with A1CF. As to expression, expressed in tongue, spleen and brain (at protein level). Expressed in liver, thigh, stomach, lung and heart to very low levels (at protein level). Expressed in heart, brain, lung and muscle.

The protein resides in the nucleus. It localises to the cytoplasm. RNA-binding protein implicated in the regulation of several post-transcriptional events. Involved in pre-mRNA alternative splicing, mRNA translation and stability. Mediates exon inclusion and/or exclusion in pre-mRNA that are subject to tissue-specific and developmentally regulated alternative splicing. Specifically activates exon 5 inclusion of TNNT2 in embryonic, but not adult, skeletal muscle. Activates TNNT2 exon 5 inclusion by antagonizing the repressive effect of PTB. Acts both as an activator and as a repressor of a pair of coregulated exons: promotes inclusion of the smooth muscle (SM) exon but exclusion of the non-muscle (NM) exon in actinin pre-mRNAs. Promotes inclusion of exonS 21 and exclusion of exon 5 of the NMDA receptor R1 pre-mRNA. Involved in the apoB RNA editing activity. Increases COX2 mRNA stability and inhibits COX2 mRNA translation in epithelial cells after radiation injury. Modulates the cellular apoptosis program by regulating COX2-mediated prostaglandin E2 (PGE2) expression. Binds to (CUG)n triplet repeats in the 3'-UTR of transcripts such as DMPK. Binds to the muscle-specific splicing enhancer (MSE) intronic sites flanking the TNNT2 alternative exon 5. Binds preferentially to UG-rich sequences, in particular UG repeat and UGUU motifs. Binds to apoB mRNA, specifically to AU-rich sequences located immediately upstream of the edited cytidine. Binds AU-rich sequences in the 3'-UTR of COX2 mRNA. Binds to an intronic RNA element responsible for the silencing of exon 21 splicing. Binds to (CUG)n repeats. May be a specific regulator of miRNA biogenesis. Binds to primary microRNA pri-MIR140 and, with CELF1, negatively regulates the processing to mature miRNA. The chain is CUGBP Elav-like family member 2 (Celf2) from Mus musculus (Mouse).